A 418-amino-acid polypeptide reads, in one-letter code: 6-methylpretetramide 4-monooxygenase (418 aa).

Residues 15-44 (DVCV…LVER) and 289-299 (WARDGLLLIGD) contribute to the FAD site.

The protein belongs to the PheA/TfdB FAD monooxygenase family. The cofactor is FAD.

It carries out the reaction 6-methylpretetramide + NADPH + O2 + 2 H(+) = 4-hydroxy-6-methylpretetramide + NADP(+) + H2O. Its pathway is antibiotic biosynthesis; oxytetracycline biosynthesis. Functionally, involved in the biosynthesis of the tetracycline antibiotic, oxytetracycline. Catalyzes the C-4 hydroxylation of 6-methylpretetramide to yield the intermediate 4-hydroxyl-6-methylpretetramid, which is subsequently hydroxylated by OxyL to yield 4-keto-anhydrotetracycline. OxyE serves as the ancillary enzyme to assist OxyL in the hydroxylation of C-4. This Streptomyces rimosus protein is 6-methylpretetramide 4-monooxygenase.